A 1407-amino-acid polypeptide reads, in one-letter code: Metabotropic glutamate receptor-like protein P (1407 aa).

At 1–696 (MKFKKKNIYW…KTIKVTSFVK (696 aa)) the chain is on the extracellular side. N-linked (GlcNAc...) asparagine glycans are attached at residues N43 and N58. PbH1 repeat units lie at residues 93–118 (ISDI…FDGG) and 129–150 (FVNV…FLYN). N-linked (GlcNAc...) asparagine glycosylation is found at N162, N179, N182, N230, N241, N270, N368, N391, N464, N512, N539, N544, N554, N571, N627, and N646. A PbH1 3 repeat occupies 254–279 (ISNVIFESCEFIGNRANSTGGLSFLT). A PbH1 4 repeat occupies 452 to 476 (GYSVYIENCEVKNNTGLFKGCFIDT). A helical membrane pass occupies residues 697-717 (FLVGTLAAILLIILIISGFIS). The Cytoplasmic portion of the chain corresponds to 718 to 731 (LKYRKKRVIRYSNP). A helical transmembrane segment spans residues 732-752 (LFLCIILVGCIIFLITIPVLF). Over 753-758 (GSTSAT) the chain is Extracellular. A helical transmembrane segment spans residues 759-779 (CKIRFPIIVIGSCLVTSSVFI). Over 780 to 806 (KQFRIWRLIKDIQLLRETNVENKYLLK) the chain is Cytoplasmic. A helical transmembrane segment spans residues 807–827 (FISILMVIPIIIVICSFFIFP). Topologically, residues 828 to 853 (THEKYTFNQRDITITHYCSDGSYLAY) are extracellular. Residues 854–874 (VIIFLVYQMAILLFGCYLVIV) form a helical membrane-spanning segment. At 875 to 890 (CRKFRSIPGTFNEATY) the chain is on the cytoplasmic side. A helical membrane pass occupies residues 891–911 (IGILIYNYTVVLIVAIPLAYV). Topologically, residues 912 to 919 (FNKNPLAN) are extracellular. The chain crosses the membrane as a helical span at residues 920-940 (FLIFSISIIVFVLSTIILLFI). Over 941 to 1407 (PKFHFLLRKK…LSPINLSKRK (467 aa)) the chain is Cytoplasmic. Over residues 991 to 1004 (QQRQGNLYNNNSLG) the composition is skewed to polar residues. Disordered regions lie at residues 991–1072 (QQRQ…DPNF), 1084–1248 (GKRK…SSIG), 1267–1351 (KKVK…NFNE), and 1369–1407 (FHQK…SKRK). The segment covering 1005–1029 (RSISSNTRKRSNNNINNNNNNNSFN) has biased composition (low complexity). Positions 1030–1040 (MTGFSDSSSTI) are enriched in polar residues. Residues 1041-1071 (SNPNLTSFTSSPSSLNSSSDSDSTPDFNDPN) show a composition bias toward low complexity. Basic and acidic residues predominate over residues 1084–1093 (GKRKSIEKNK). Composition is skewed to low complexity over residues 1099–1147 (PNSP…NTPI), 1154–1246 (SSKT…SDSS), and 1276–1339 (SDST…NNNN). Residues 1315-1344 (NNNNNNNNNNNNNINNNNNNANNNNSDTDD) adopt a coiled-coil conformation.

This sequence belongs to the G-protein coupled receptor 3 family. GABA-B receptor subfamily.

It is found in the membrane. This chain is Metabotropic glutamate receptor-like protein P (grlP), found in Dictyostelium discoideum (Social amoeba).